Consider the following 518-residue polypeptide: Zinc finger protein 776 (518 aa).

Residues 14–89 (VTFEDVAVNF…HWTGVCTKKV (76 aa)) enclose the KRAB domain. Glycyl lysine isopeptide (Lys-Gly) (interchain with G-Cter in SUMO2) cross-links involve residues lysine 171, lysine 196, lysine 220, and lysine 247. The segment at 208–230 (YICGESTIPFSNKHSLVLHQRLL) adopts a C2H2-type 1; degenerate zinc-finger fold. The segment at 236-258 (YVCSDSGKFTSKSNSFNNHQGVR) adopts a C2H2-type 2; degenerate zinc-finger fold. 7 consecutive C2H2-type zinc fingers follow at residues 264 to 286 (YQCG…QRVH), 292 to 314 (YECG…QRVH), 320 to 342 (YECD…QRVH), 348 to 370 (YQCG…QRVH), 376 to 398 (FECT…QRVH), 404 to 426 (YECK…QRVH), and 432 to 454 (YECR…QQIH). The C2H2-type 10; degenerate zinc-finger motif lies at 460-482 (HECGECGKCFHQKGSLIRHQQIH). Residues 488–510 (HECGECGKCFRQKGNLIKHQRVH) form a C2H2-type 11 zinc finger.

It belongs to the krueppel C2H2-type zinc-finger protein family.

The protein localises to the nucleus. Functionally, may be involved in transcriptional regulation. This is Zinc finger protein 776 (ZNF776) from Homo sapiens (Human).